A 160-amino-acid chain; its full sequence is MGVTKKPDLNDPVLRAKLAKGMGHNYYGEPAWPNDLLYIFPVVILGTIACNVGLAVLEPSMIGEPADPFATPLEILPEWYFFPVFQILRTVPNKLLGVFLMVSVPAGLLTVPFLENVNKFQNPFRRPVATTVFLIGTAVALWLGIGATLPIDKSLTLGLF.

The next 3 helical transmembrane spans lie at 36 to 56 (LLYIFPVVILGTIACNVGLAV), 95 to 115 (LLGVFLMVSVPAGLLTVPFLE), and 131 to 151 (TVFLIGTAVALWLGIGATLPI).

It belongs to the cytochrome b family. PetD subfamily. In terms of assembly, the 4 large subunits of the cytochrome b6-f complex are cytochrome b6, subunit IV (17 kDa polypeptide, petD), cytochrome f and the Rieske protein, while the 4 small subunits are petG, petL, petM and petN. The complex functions as a dimer.

It localises to the plastid. Its subcellular location is the chloroplast thylakoid membrane. Its function is as follows. Component of the cytochrome b6-f complex, which mediates electron transfer between photosystem II (PSII) and photosystem I (PSI), cyclic electron flow around PSI, and state transitions. The polypeptide is Cytochrome b6-f complex subunit 4 (Gossypium barbadense (Sea Island cotton)).